The sequence spans 310 residues: B3 domain-containing protein At4g02870 (310 aa).

Over residues 1–21 the composition is skewed to polar residues; that stretch reads MTLSDDPISPSTQESSNSSYV. Residues 1 to 39 are disordered; that stretch reads MTLSDDPISPSTQESSNSSYVRSKEAEKNSPSQETDEEV. Residues 205-300 constitute a DNA-binding region (TF-B3); the sequence is RCGRLILQSS…RLQFGVISRN (96 aa).

It is found in the nucleus. This chain is B3 domain-containing protein At4g02870 (ARF42), found in Arabidopsis thaliana (Mouse-ear cress).